The sequence spans 222 residues: Endonuclease V (222 aa).

Mg(2+) contacts are provided by aspartate 43 and aspartate 109.

This sequence belongs to the endonuclease V family. The cofactor is Mg(2+).

The protein resides in the cytoplasm. The enzyme catalyses Endonucleolytic cleavage at apurinic or apyrimidinic sites to products with a 5'-phosphate.. In terms of biological role, DNA repair enzyme involved in the repair of deaminated bases. Selectively cleaves double-stranded DNA at the second phosphodiester bond 3' to a deoxyinosine leaving behind the intact lesion on the nicked DNA. In Roseiflexus castenholzii (strain DSM 13941 / HLO8), this protein is Endonuclease V.